The chain runs to 277 residues: Phosphoribosylaminoimidazole-succinocarboxamide synthase (277 aa).

This sequence belongs to the SAICAR synthetase family.

The catalysed reaction is 5-amino-1-(5-phospho-D-ribosyl)imidazole-4-carboxylate + L-aspartate + ATP = (2S)-2-[5-amino-1-(5-phospho-beta-D-ribosyl)imidazole-4-carboxamido]succinate + ADP + phosphate + 2 H(+). It functions in the pathway purine metabolism; IMP biosynthesis via de novo pathway; 5-amino-1-(5-phospho-D-ribosyl)imidazole-4-carboxamide from 5-amino-1-(5-phospho-D-ribosyl)imidazole-4-carboxylate: step 1/2. This is Phosphoribosylaminoimidazole-succinocarboxamide synthase from Salinispora tropica (strain ATCC BAA-916 / DSM 44818 / JCM 13857 / NBRC 105044 / CNB-440).